Here is a 272-residue protein sequence, read N- to C-terminus: Ribosomal RNA small subunit methyltransferase A (272 aa).

S-adenosyl-L-methionine-binding residues include N20, L22, G47, E68, D93, and N114.

It belongs to the class I-like SAM-binding methyltransferase superfamily. rRNA adenine N(6)-methyltransferase family. RsmA subfamily.

The protein resides in the cytoplasm. It carries out the reaction adenosine(1518)/adenosine(1519) in 16S rRNA + 4 S-adenosyl-L-methionine = N(6)-dimethyladenosine(1518)/N(6)-dimethyladenosine(1519) in 16S rRNA + 4 S-adenosyl-L-homocysteine + 4 H(+). Functionally, specifically dimethylates two adjacent adenosines (A1518 and A1519) in the loop of a conserved hairpin near the 3'-end of 16S rRNA in the 30S particle. May play a critical role in biogenesis of 30S subunits. The polypeptide is Ribosomal RNA small subunit methyltransferase A (Aliivibrio fischeri (strain ATCC 700601 / ES114) (Vibrio fischeri)).